Here is a 713-residue protein sequence, read N- to C-terminus: Forkhead box protein P2 (713 aa).

Polar residues predominate over residues 1–28 (MMQESATETISNSSMNQNGMSTLSSQLD). Disordered regions lie at residues 1 to 45 (MMQE…SEVS) and 279 to 337 (DNGI…TGAS). The span at 290–303 (TTNNSSSTTSSTTS) shows a compositional bias: low complexity. Residues 313–322 (SIVNGQSSVL) are compositionally biased toward polar residues. The span at 324–335 (ARRDSSSHEETG) shows a compositional bias: basic and acidic residues. The C2H2-type zinc-finger motif lies at 344–369 (GVCKWPGCESICEDFGQFLKHLNNEH). Residues 386–407 (VQQLEIQLSKERERLQAMMTHL) form a leucine-zipper region. Residues 420–424 (PLNLV) form a CTBP1-binding region. The span at 436–457 (TSPQSLPQTPTTPTAPVTPITQ) shows a compositional bias: low complexity. The tract at residues 436–463 (TSPQSLPQTPTTPTAPVTPITQGPSVIT) is disordered. Residues 502 to 592 (RPPFTYATLI…SQKITGSPTL (91 aa)) constitute a DNA-binding region (fork-head). Disordered stretches follow at residues 647 to 666 (LDHI…QPHI) and 676 to 713 (VIAE…EDLE). Positions 697-713 (LEDDREIEEEPLSEDLE) are enriched in acidic residues.

In terms of assembly, forms homodimers and heterodimers with FOXP1 and FOXP4. Dimerization is required for DNA-binding. Interacts with CTBP1. Interacts with FOXP1. Interacts with TBR1. Interacts with ZMYM2.

It localises to the nucleus. Transcriptional repressor that may play a role in the specification and differentiation of lung epithelium. May also play a role in developing neural, gastrointestinal and cardiovascular tissues. Can act with CTBP1 to synergistically repress transcription but CTPBP1 is not essential. Plays a role in synapse formation by regulating SRPX2 levels. The sequence is that of Forkhead box protein P2 (FOXP2) from Hylobates lar (Lar gibbon).